The following is a 349-amino-acid chain: MTQAATRPTNDAGQDGGNNSDILVVARQQVLQRGEGLNQDQVLAVLQLPDDRLEELLALAHEVRMRWCGPEVEVEGIISLKTGGCPEDCHFCSQSGLFASPVRSAWLDIPSLVEAAKQTAKSGATEFCIVAAVRGPDERLMAQVAAGIEAIRNEVEINIACSLGMLTAEQVDQLAARGVHRYNHNLETARSFFANVVTTHTWEERWQTLSMVRDAGMEVCCGGILGMGETLQQRAEFAAELAELGPDEVPLNFLNPRPGTPFADLEVMPVGDALKAVAAFRLALPRTMLRFAGGREITLGDLGAKRGILGGINAVIVGNYLTTLGRPAEADLELLDELQMPLKALNASL.

Positions 70 to 295 (PEVEVEGIIS…RTMLRFAGGR (226 aa)) constitute a Radical SAM core domain. Residues Cys-85, Cys-89, and Cys-92 each coordinate [4Fe-4S] cluster. The [2Fe-2S] cluster site is built by Cys-128, Cys-161, Cys-220, and Arg-290.

Belongs to the radical SAM superfamily. Biotin synthase family. In terms of assembly, homodimer. It depends on [4Fe-4S] cluster as a cofactor. [2Fe-2S] cluster serves as cofactor.

It carries out the reaction (4R,5S)-dethiobiotin + (sulfur carrier)-SH + 2 reduced [2Fe-2S]-[ferredoxin] + 2 S-adenosyl-L-methionine = (sulfur carrier)-H + biotin + 2 5'-deoxyadenosine + 2 L-methionine + 2 oxidized [2Fe-2S]-[ferredoxin]. It functions in the pathway cofactor biosynthesis; biotin biosynthesis; biotin from 7,8-diaminononanoate: step 2/2. Catalyzes the conversion of dethiobiotin (DTB) to biotin by the insertion of a sulfur atom into dethiobiotin via a radical-based mechanism. The polypeptide is Biotin synthase (Mycobacterium bovis (strain ATCC BAA-935 / AF2122/97)).